The sequence spans 350 residues: MAEAHVTKVGIVGIGFIGSDHLHRLTKTVANVDVTAVCDIVPGKAQKALDQQGLTATTYEDYHDLVNDPNVEVVVCTANNEAHYEIVMAALKAGKFTFCEKPLALDAKQCMDIIDSEKKLGRRMLQVGFMRHYAPEYVQMKKMIDDGVIGKPLMMDQRHYNQTQPEEYDSSRSIIETAIHEIDIDHWLVNDDYANIRVFSPKQTRHVQNAKIQDPQIVMIETKSGINIINEVFVRCQYGYDIKCDVIGEEGVLELPTVPQVATRLNAQYSTAILTDWKARFESAYDIEFRDFINHVSQNESPVGPSAWDGYIAAVTADAALKSLAEDGAKQDLDFPSTPAFYTESEKVSE.

It belongs to the Gfo/Idh/MocA family. In terms of assembly, homotetramer.

It catalyses the reaction myo-inositol + NAD(+) = scyllo-inosose + NADH + H(+). The enzyme catalyses 1D-chiro-inositol + NAD(+) = scyllo-inosine + NADH + H(+). It participates in polyol metabolism; myo-inositol degradation into acetyl-CoA; acetyl-CoA from myo-inositol: step 1/7. Functionally, involved in the oxidation of myo-inositol (MI) and D-chiro-inositol (DCI) to 2-keto-myo-inositol (2KMI or 2-inosose) and 1-keto-D-chiro-inositol (1KDCI), respectively. This chain is Inositol 2-dehydrogenase/D-chiro-inositol 3-dehydrogenase, found in Lactiplantibacillus plantarum (strain ATCC BAA-793 / NCIMB 8826 / WCFS1) (Lactobacillus plantarum).